The chain runs to 96 residues: MKFRPLHDRVVVRRIESEEKTKGGIIIPDTAKEKPQEGEVVAVGPGARDEQGRVNALDVKAGDRVLFGKWSGTEVKIDGQDLLIMKESDIMGVVAL.

It belongs to the GroES chaperonin family. As to quaternary structure, heptamer of 7 subunits arranged in a ring. Interacts with the chaperonin GroEL.

It is found in the cytoplasm. In terms of biological role, together with the chaperonin GroEL, plays an essential role in assisting protein folding. The GroEL-GroES system forms a nano-cage that allows encapsulation of the non-native substrate proteins and provides a physical environment optimized to promote and accelerate protein folding. GroES binds to the apical surface of the GroEL ring, thereby capping the opening of the GroEL channel. The chain is Co-chaperonin GroES from Methylobacterium radiotolerans (strain ATCC 27329 / DSM 1819 / JCM 2831 / NBRC 15690 / NCIMB 10815 / 0-1).